The chain runs to 248 residues: MPTPPVSALVAQMGEGPAPLYARVKQMIIQQIDNGSWPPHHRVPSESELVNELGFSRMTINRALRELTADGLLVRMQGVGTFVAEPKGRSALFEVNNIADEIAARGHQHSCQVITLTEEAAGSERALALDMREGQRVFHSLIVHFENGVPVQIEDRYVNAAIAPDYLKQDFTRQTPYAYLSQVAPLTEGEHVVEAILAEPEECRLLQIERGEPCLLIRRRTWSGRQPVTAARLIHPGSRHRLEGRFSK.

An HTH gntR-type domain is found at Ala-18–Pro-86. Residues Glu-46–Arg-65 constitute a DNA-binding region (H-T-H motif).

It participates in amino-acid degradation; L-histidine degradation into L-glutamate [regulation]. Functionally, repressor which binds to the hutP region in the histidine utilization (hut) operon. It blocks the expression of all the hut genes in the absence of inducer. The polypeptide is Histidine utilization repressor (hutC) (Pseudomonas putida (Arthrobacter siderocapsulatus)).